The sequence spans 428 residues: Histidinol dehydrogenase homolog (428 aa).

Zn(2+) contacts are provided by Gln250 and His253. Residues Glu320 and His321 each act as proton acceptor in the active site. Positions 354 and 413 each coordinate Zn(2+).

It belongs to the histidinol dehydrogenase family. Zn(2+) is required as a cofactor.

The sequence is that of Histidinol dehydrogenase homolog from Pelagibacter ubique (strain HTCC1062).